The following is a 139-amino-acid chain: D-ribose pyranase (139 aa).

The Proton donor role is filled by H20. Substrate-binding positions include D28, H106, and 128 to 130; that span reads YAN.

Belongs to the RbsD / FucU family. RbsD subfamily. As to quaternary structure, homodecamer.

Its subcellular location is the cytoplasm. The catalysed reaction is beta-D-ribopyranose = beta-D-ribofuranose. It participates in carbohydrate metabolism; D-ribose degradation; D-ribose 5-phosphate from beta-D-ribopyranose: step 1/2. Functionally, catalyzes the interconversion of beta-pyran and beta-furan forms of D-ribose. The chain is D-ribose pyranase from Pectobacterium atrosepticum (strain SCRI 1043 / ATCC BAA-672) (Erwinia carotovora subsp. atroseptica).